Reading from the N-terminus, the 208-residue chain is MSTVVVKGNVNGGVQQPRMRRRQSLRRRANRVQPVVMVTAPGQPRRRRRRRGGNRRSRRTGVPRGRGSSETFVFTKDNLVGNTQGSFTFGPSLSDCPAFKDGILKAYHEYKITSILLQFVSEASSTSSGSIAYELDPHCKVSSLQSYVNKFQITKGGAKTYQARMINGVEWHDSSEDQCRILWKGNGKSSDSAGSFRVTIKVALQNPK.

The segment covering 1 to 17 has biased composition (low complexity); the sequence is MSTVVVKGNVNGGVQQP. Residues 1–68 form a disordered region; that stretch reads MSTVVVKGNV…RTGVPRGRGS (68 aa). Composition is skewed to basic residues over residues 18-30 and 44-61; these read RMRR…RRAN and PRRR…RRTG.

This sequence belongs to the luteoviruses capsid protein family.

It is found in the virion. Major capsid protein that self-assembles to form an icosahedral capsid with a T=3 symmetry, about 23 nm in diameter, and consisting of 180 capsid proteins monomers. Most of the 180 monomers are the major capsid protein, but a small percentage contain the minor capsid protein, which has a long C-terminal extension. This Potato leafroll virus (strain Potato/Scotland/strain 1/1984) (PLrV) protein is Major capsid protein.